Consider the following 233-residue polypeptide: Superoxide dismutase [Mn], mitochondrial (233 aa).

A mitochondrion-targeting transit peptide spans Met-1–Thr-26. His-52 and His-107 together coordinate Mn(2+). Thr-147 and Thr-149 each carry phosphothreonine. 2 residues coordinate Mn(2+): Asp-194 and His-198.

Belongs to the iron/manganese superoxide dismutase family. As to quaternary structure, homotetramer. It depends on Mn(2+) as a cofactor.

The protein resides in the mitochondrion matrix. It carries out the reaction 2 superoxide + 2 H(+) = H2O2 + O2. Its function is as follows. Destroys superoxide anion radicals which are normally produced within the cells and which are toxic to biological systems. This Saccharomyces cerevisiae (strain ATCC 204508 / S288c) (Baker's yeast) protein is Superoxide dismutase [Mn], mitochondrial (SOD2).